Here is a 500-residue protein sequence, read N- to C-terminus: Glycerol kinase (500 aa).

Threonine 12 provides a ligand contact to ADP. 3 residues coordinate ATP: threonine 12, threonine 13, and serine 14. Residue threonine 12 coordinates sn-glycerol 3-phosphate. Arginine 16 provides a ligand contact to ADP. The sn-glycerol 3-phosphate site is built by arginine 82, glutamate 83, tyrosine 135, and aspartate 245. 5 residues coordinate glycerol: arginine 82, glutamate 83, tyrosine 135, aspartate 245, and glutamine 246. Threonine 267 and glycine 310 together coordinate ADP. Positions 267, 310, 314, and 411 each coordinate ATP. The ADP site is built by glycine 411 and asparagine 415.

The protein belongs to the FGGY kinase family. Homotetramer and homodimer (in equilibrium).

It catalyses the reaction glycerol + ATP = sn-glycerol 3-phosphate + ADP + H(+). The protein operates within polyol metabolism; glycerol degradation via glycerol kinase pathway; sn-glycerol 3-phosphate from glycerol: step 1/1. Its activity is regulated as follows. Activated by phosphorylation and inhibited by fructose 1,6-bisphosphate (FBP). In terms of biological role, key enzyme in the regulation of glycerol uptake and metabolism. Catalyzes the phosphorylation of glycerol to yield sn-glycerol 3-phosphate. This Clostridium perfringens (strain ATCC 13124 / DSM 756 / JCM 1290 / NCIMB 6125 / NCTC 8237 / Type A) protein is Glycerol kinase.